A 452-amino-acid chain; its full sequence is Membrane-bound acylglycerophosphatidylinositol O-acyltransferase mboa-7 (452 aa).

4 consecutive transmembrane segments (helical) span residues 4–24 (IIGL…FSFA), 53–73 (PRIA…AFAP), 79–99 (FYVF…HYFL), and 104–124 (VASH…GITF). Residue asparagine 137 is glycosylated (N-linked (GlcNAc...) asparagine). 3 helical membrane-spanning segments follow: residues 153-173 (FAYF…YQML), 220-240 (AIWE…FVVF), and 244-264 (VYSA…GIYP). Asparagine 319 carries N-linked (GlcNAc...) asparagine glycosylation. Histidine 350 is an active-site residue. The helical transmembrane segment at 354–374 (AGYFMSFGVVAMCAILEDVIF) threads the bilayer. The N-linked (GlcNAc...) asparagine glycan is linked to asparagine 414. The chain crosses the membrane as a helical span at residues 421-441 (FWSSIYYWLPLLCVPFYIYSV).

The protein belongs to the membrane-bound acyltransferase family.

It is found in the membrane. The enzyme catalyses a 1-acyl-sn-glycero-3-phospho-(1D-myo-inositol) + an acyl-CoA = a 1,2-diacyl-sn-glycero-3-phospho-(1D-myo-inositol) + CoA. The catalysed reaction is a fatty acyl-[ACP] + a 1-acyl-sn-glycero-3-phosphate = a 1,2-diacyl-sn-glycero-3-phosphate + holo-[ACP]. It participates in lipid metabolism; phospholipid metabolism. In terms of biological role, acyltransferase which mediates the conversion of lysophosphatidylinositol (1-acylglycerophosphatidylinositol or LPI) into phosphatidylinositol (1,2-diacyl-sn-glycero-3-phosphoinositol or PI) (LPIAT activity). Prefers arachidonoyl-CoA or eicosapentaenoic acid (EPA) as the acyl donor. Prefers sn-2-LPI rather than sn-1-LPI as the acyl acceptor. Lysophospholipid acyltransferases (LPLATs) catalyze the reacylation step of the phospholipid remodeling pathway also known as the Lands cycle. This chain is Membrane-bound acylglycerophosphatidylinositol O-acyltransferase mboa-7, found in Caenorhabditis briggsae.